A 549-amino-acid chain; its full sequence is Adhesion G protein-coupled receptor G3 (549 aa).

The first 20 residues, 1 to 20 (MATPRGLGALLLLLLLPTSG), serve as a signal peptide directing secretion. Topologically, residues 21–270 (QEKPTEGPRN…DQSTVHILTR (250 aa)) are extracellular. N-linked (GlcNAc...) asparagine glycans are attached at residues asparagine 98, asparagine 144, and asparagine 210. Residues 107-262 (FYFSLEPSQV…ALLLRPTLDQ (156 aa)) enclose the GAIN-B domain. Intrachain disulfides connect cysteine 215/cysteine 244 and cysteine 233/cysteine 246. The interval 215 to 262 (CVFWDVTKGTTGDWSSEGCSTEVRPEGTVCCCDHLTFFALLLRPTLDQ) is GPS. The stachel stretch occupies residues 251-259 (FFALLLRPT). Residues 271 to 295 (ISQAGCGVSMIFLAFTIILYAFLRL) traverse the membrane as a helical segment. Over 296-304 (SRERFKSED) the chain is Cytoplasmic. The chain crosses the membrane as a helical span at residues 305–326 (APKIHVALGGSLFLLNLAFLVN). The Extracellular segment spans residues 327–338 (VGSGSKGSDAAC). Cysteine 338 and cysteine 420 form a disulfide bridge. A helical transmembrane segment spans residues 339-364 (WARGAVFHYFLLCAFTWMGLEAFHLY). The Cytoplasmic portion of the chain corresponds to 365–378 (LLAVRVFNTYFGHY). The helical transmembrane segment at 379-400 (FLKLSLVGWGLPALMVIGTGSA) threads the bilayer. Residues 401–428 (NSYGLYTIRDRENRTSLELCWFREGTTM) lie on the Extracellular side of the membrane. Asparagine 413 is a glycosylation site (N-linked (GlcNAc...) asparagine). The helical transmembrane segment at 429–454 (YALYITVHGYFLITFLFGMVVLALVV) threads the bilayer. Over 455-474 (WKIFTLSRATAVKERGKNRK) the chain is Cytoplasmic. A helical membrane pass occupies residues 475 to 495 (KVLTLLGLSSLVGVTWGLAIF). At 496-501 (TPLGLS) the chain is on the extracellular side. The chain crosses the membrane as a helical span at residues 502-525 (TVYIFALFNSLQGVFICCWFTILY). Cortisol is bound at residue asparagine 510. The Cytoplasmic segment spans residues 526-549 (LPSQSTTVSSSTARLDQAHSASQE).

Belongs to the G-protein coupled receptor 2 family. Adhesion G-protein coupled receptor (ADGR) subfamily. As to quaternary structure, heterodimer of 2 chains generated by proteolytic processing; the large extracellular N-terminal fragment and the membrane-bound C-terminal fragment predominantly remain associated and non-covalently linked. Interacts with PRTN3; this interaction induces the activation of PAR2. Interacts with GNAO1 (when palmitoylated). In terms of processing, autoproteolytically processed at the GPS region of the GAIN-B domain; this cleavage modulates receptor activity. Post-translationally, O- and N-glycosylated. Expressed in cultured primary dermal lymphatic endothelial cells. Highly expressed in polymorphonuclear cells (PMNs) including neutrophilic, eosinophilic, and basophilic granulocytes.

It is found in the cell membrane. With respect to regulation, forms a heterodimer of 2 chains generated by proteolytic processing that remain associated through non-covalent interactions mediated by the GAIN-B domain. In the inactivated receptor, the Stachel sequence (also named stalk) is embedded in the GAIN-B domain, where it adopts a beta-strand conformation. On activation, the Stachel moves into the 7 transmembrane region and adopts a twisted hook-shaped configuration that forms contacts within the receptor, leading to coupling of a G-alpha protein, which activates signaling. The cleaved GAIN-B and N-terminal domains can then dissociate from the rest of the receptor. In terms of biological role, adhesion G-protein coupled receptor (aGPCR) for glucocorticoid hormones such as cortisol, cortisone and 11-deoxycortisol. Ligand binding causes a conformation change that triggers signaling via guanine nucleotide-binding proteins (G proteins) and modulates the activity of downstream effectors, such as adenylate cyclase. ADGRG3/GPR97 is coupled to G(o)/GNAO1 G proteins and mediates signaling by inhibiting adenylate cyclase activity. May also signal through G-alpha(q)-proteins; additional evidence are however required to confirm this result in vivo. Plays a role in the regulation of various processes including B-cell development, inflammation or innate immunity. Regulates migration of lymphatic endothelial cells in vitro via the small GTPases RhoA and CDC42. Antibody ligation leads to the production and activation of antimicrobial mediators like reactive oxygen species (ROS) and myeloperoxidase (MPO) as well as enhanced bacteria uptake and killing by granulocytes. Additionally, collaborates with protease-activated receptor 2/PAR2 to stimulate neutrophil-driven antimicrobial responses and endothelial cell activation. This is Adhesion G protein-coupled receptor G3 from Homo sapiens (Human).